A 265-amino-acid polypeptide reads, in one-letter code: Orotidine 5'-phosphate decarboxylase (265 aa).

Residues aspartate 37, 59-61 (KTH), 91-100 (DRKFADIGNT), tyrosine 217, and arginine 235 each bind substrate. Residue lysine 93 is the Proton donor of the active site.

The protein belongs to the OMP decarboxylase family.

The catalysed reaction is orotidine 5'-phosphate + H(+) = UMP + CO2. The protein operates within pyrimidine metabolism; UMP biosynthesis via de novo pathway; UMP from orotate: step 2/2. The polypeptide is Orotidine 5'-phosphate decarboxylase (URA3) (Diutina rugosa (Yeast)).